Consider the following 336-residue polypeptide: MSDEKDIYDLTIIGGGPVGLFAAFYAGIRKAKTKIIDSLPQLGGQLTMLYPEKYIYDIPGFPAIKAGELIANLEKQMQPFQHDVCLEEEVTHLAQEADGLLRLDTTKGTHYSKTVIFAIGNGAFQPRRLAIENVEAFEGESIHYYVTDMKKFAGKKVAIAGGGDSAIDWALMLENVAEEVSIIHRRPQFRGHEHSVEQLEKSSVSIRTPYIISDILKENETFTGIQLTETKGDQTLDLPLDDLIINYGFTSSLTHLKEWGLDVSRNAINVHSDMSTNIPGVYAVGDICSYEGKVKLIATGFGEAPTAVNNALHYLRPDARRQPVHSTSLFENGVPK.

The FAD site is built by D37, Q45, Y50, V90, F124, D286, and T327.

The protein belongs to the ferredoxin--NADP reductase type 2 family. In terms of assembly, homodimer. FAD serves as cofactor.

It catalyses the reaction 2 reduced [2Fe-2S]-[ferredoxin] + NADP(+) + H(+) = 2 oxidized [2Fe-2S]-[ferredoxin] + NADPH. The sequence is that of Ferredoxin--NADP reductase from Enterococcus faecalis (strain ATCC 700802 / V583).